Consider the following 142-residue polypeptide: Putative pre-16S rRNA nuclease (142 aa).

This sequence belongs to the YqgF nuclease family.

Its subcellular location is the cytoplasm. In terms of biological role, could be a nuclease involved in processing of the 5'-end of pre-16S rRNA. The chain is Putative pre-16S rRNA nuclease from Lactobacillus delbrueckii subsp. bulgaricus (strain ATCC BAA-365 / Lb-18).